Reading from the N-terminus, the 1664-residue chain is MYND-type zinc finger-containing chromatin reader Zmynd8 (1664 aa).

Low complexity-rich tracts occupy residues 1–16 (MEST…SLKS), 30–40 (SPQPQLQSSSL), and 61–84 (SAPP…INVG). Disordered regions lie at residues 1–84 (MEST…INVG), 251–271 (SLSN…LRSE), and 295–323 (LALN…KTPE). Residues 258 to 271 (NDDKGPRRSNLRSE) are compositionally biased toward basic and acidic residues. Residues 296 to 308 (ALNTSGEGESSLF) show a composition bias toward polar residues. The segment covering 309–320 (SDASDTKTTTAK) has biased composition (low complexity). A PHD-type zinc finger spans residues 343-389 (DPFCWKCRGCGKLMPCSKCLRSFHSYCVRPATTKFDSSWKCPECQVI). Zn(2+) is bound by residues cysteine 346, cysteine 349, cysteine 358, cysteine 361, histidine 366, cysteine 369, cysteine 383, and cysteine 386. The Bromo domain maps to 401 to 504 (VSVDLLSQLL…KVCRQEANEI (104 aa)). Zn(2+) is bound by residues cysteine 507, cysteine 510, and cysteine 525. The region spanning 528 to 579 (PHLLLWAKLKGFPYWPAKAMGSSNSTLVNVRFFGKHDRAFVPVKDCFLYSAQ) is the PWWP domain. Disordered regions lie at residues 672 to 693 (KTKA…KKLS), 747 to 815 (ESVE…QNEN), 857 to 905 (KIPR…RQQE), and 919 to 1139 (TEVM…TNTS). The span at 676-690 (TESGNESDQSPSPTK) shows a compositional bias: polar residues. A compositionally biased stretch (basic residues) spans 775 to 784 (HKRKSKHARK). The segment covering 785 to 800 (QHDNQDNQIEEAEKTG) has biased composition (basic and acidic residues). A compositionally biased stretch (pro residues) spans 874-884 (IPLPTAPPPKQ). The segment covering 935 to 952 (PANQPQTDQVPLQQETIT) has biased composition (polar residues). The segment covering 953-962 (AQPESQMPAA) has biased composition (low complexity). Pro residues predominate over residues 1006-1019 (PPMPLPMPPPPPLP). A compositionally biased stretch (polar residues) spans 1037–1053 (TTIQRVSQKQGGKSTDT). Residues 1073–1097 (SPTHSPLLSTAPSPSASPKPTSTLA) are compositionally biased toward low complexity. Zn(2+) is bound by residues cysteine 1399, cysteine 1402, cysteine 1410, cysteine 1411, cysteine 1417, cysteine 1421, histidine 1429, and cysteine 1433. Residues 1399 to 1433 (CANCMREAQLYCCWNTSYCDYPCQQLHWPGHSATC) form an MYND-type zinc finger. The interval 1613–1648 (VPKATGRSGKNNSRMRQTYSNNINNSNPQGMRCNNN) is disordered. Over residues 1620–1648 (SGKNNSRMRQTYSNNINNSNPQGMRCNNN) the composition is skewed to polar residues.

The protein localises to the nucleus. Its subcellular location is the chromosome. Functionally, chromatin reader that recognizes specific histone signatures to regulate transcription. Plays a role in neuronal development. This Drosophila melanogaster (Fruit fly) protein is MYND-type zinc finger-containing chromatin reader Zmynd8.